Reading from the N-terminus, the 311-residue chain is Aspartate carbamoyltransferase catalytic subunit (311 aa).

Arginine 55 and threonine 56 together coordinate carbamoyl phosphate. Lysine 83 provides a ligand contact to L-aspartate. Carbamoyl phosphate-binding residues include arginine 105, histidine 134, and glutamine 137. Residues arginine 167 and arginine 226 each contribute to the L-aspartate site. Carbamoyl phosphate contacts are provided by glycine 267 and proline 268.

This sequence belongs to the aspartate/ornithine carbamoyltransferase superfamily. ATCase family. Heterododecamer (2C3:3R2) of six catalytic PyrB chains organized as two trimers (C3), and six regulatory PyrI chains organized as three dimers (R2).

The catalysed reaction is carbamoyl phosphate + L-aspartate = N-carbamoyl-L-aspartate + phosphate + H(+). Its pathway is pyrimidine metabolism; UMP biosynthesis via de novo pathway; (S)-dihydroorotate from bicarbonate: step 2/3. Functionally, catalyzes the condensation of carbamoyl phosphate and aspartate to form carbamoyl aspartate and inorganic phosphate, the committed step in the de novo pyrimidine nucleotide biosynthesis pathway. The sequence is that of Aspartate carbamoyltransferase catalytic subunit from Corynebacterium jeikeium (strain K411).